Reading from the N-terminus, the 169-residue chain is Large ribosomal subunit protein bL19m (169 aa).

A mitochondrion-targeting transit peptide spans 1–16 (MWSRNVRLLGSWTRSY).

This sequence belongs to the bacterial ribosomal protein bL19 family. In terms of assembly, component of the mitochondrial large ribosomal subunit (mt-LSU). Mature yeast 74S mitochondrial ribosomes consist of a small (37S) and a large (54S) subunit. The 37S small subunit contains a 15S ribosomal RNA (15S mt-rRNA) and 34 different proteins. The 54S large subunit contains a 21S rRNA (21S mt-rRNA) and 46 different proteins.

The protein localises to the mitochondrion. Its function is as follows. Component of the mitochondrial ribosome (mitoribosome), a dedicated translation machinery responsible for the synthesis of mitochondrial genome-encoded proteins, including at least some of the essential transmembrane subunits of the mitochondrial respiratory chain. The mitoribosomes are attached to the mitochondrial inner membrane and translation products are cotranslationally integrated into the membrane. bL19m is essential for respiration. The chain is Large ribosomal subunit protein bL19m (IMG1) from Saccharomyces cerevisiae (strain ATCC 204508 / S288c) (Baker's yeast).